We begin with the raw amino-acid sequence, 265 residues long: Secreted RxLR effector protein 16 (265 aa).

The N-terminal stretch at Met1–Ala19 is a signal peptide. A RxLR-dEER motif is present at residues Arg46–Arg61. Residues Asn170, Asn219, and Asn240 are each glycosylated (N-linked (GlcNAc...) asparagine).

Belongs to the RxLR effector family. N-glycosylated. The putative N-glycosylation site at position 240 is essential for cell death-inducing activity.

The protein resides in the secreted. Its subcellular location is the host nucleus. Its function is as follows. Effector that acts as an elicitor that induces cell death and promotes ROS accumulation in Nicotian benthamiana. RxLR16-triggered cell death is dependent on SGT1, HSP90 and RAR1, but independent of the somatic embryogenesis receptor-like kinase SERK3/BAK1, indicating that it acts independently of the detection of cell surface pattern recognition receptors. Enhances the expressional levels of defense-associated genes involved in the salicylic acid-, jasmonate acid-, and ethylene-mediated signal transduction, resulting in disease resistance. However, as some other Plasmopara viticola RxLR effectors including RxLR1, RxLR10, RxLR30 and RxLR25, can suppress defense responses and disease resistance induced by RxLR16, it may not trigger host cell death or immune responses during physiological infection under natural conditions. In Plasmopara viticola (Downy mildew of grapevine), this protein is Secreted RxLR effector protein 16.